The following is a 146-amino-acid chain: MMTDKLNLNVLDAAFYSLEQTVVQISDRNWFDMQPSIVQDTLIAGAIQKFEFVYELSLKMMKRQLQQDAINTDDIGAYGFKDILREALRFGLIGDMSKWVAYRDMRNITSHTYDQEKAMAVYAQIDDFLIESSFLLEQLRQRNQYD.

Residues arginine 106 and histidine 111 contribute to the active site. The RX(4)HXY motif motif lies at 106 to 113 (RNITSHTY). Tyrosine 113 bears the O-di-AMP-tyrosine mark.

Belongs to the HepT RNase toxin family. In terms of assembly, homodimer. Forms a complex with MntA, probably with a stoichiometry of 2:2. Modified by cognate antitoxin MntA; probably at least 2 successive AMPylation events occur on Tyr-113.

Its function is as follows. Probable toxic component of a type VII toxin-antitoxin (TA) system, probably an RNase. Neutralized by cognate antitoxin MntA. Neutralization is probably due to AMPylation by MntA. A mixture of HepT and MntA binds nucleotides; the highest affinity is for TTP, ATP binds more tightly than ADP or AMP. The chain is Probable ribonuclease HepT (hepT) from Haemophilus influenzae (strain ATCC 51907 / DSM 11121 / KW20 / Rd).